Consider the following 318-residue polypeptide: MIDLSPLARHLVGTPLAVWAQGLQAQLDSKMEKGHGDLDRWQSALDALPNIQPSEVDLLNDLALDTDCDDATRAQMRTALMGLCPWRKGPFHLFGVHVDTEWRSDWKWSRVAPHLDLKGKRILDVGCGNGYYMWRMLGAGADSVIGVDPNWLFFCQFQAVQRYLSEPKAWHLPFPFEDLPANLEGFDTVFSMGVFYHRRSPIEHLLALKDTLVKGGELVLETLVVEGDQQQVLVPEDRYAQMRNVWFLPSVPALMLWLRRAGFSDVRCVDVSVTTVEEQRGTEWMKYQSLSDFLDPEDHSKTLEGLPAPMRAVIIAKK.

7 residues coordinate carboxy-S-adenosyl-L-methionine: Lys88, Trp102, Lys107, Gly126, Met192, Tyr196, and Arg311.

This sequence belongs to the class I-like SAM-binding methyltransferase superfamily. CmoB family. Homotetramer.

The enzyme catalyses carboxy-S-adenosyl-L-methionine + 5-hydroxyuridine(34) in tRNA = 5-carboxymethoxyuridine(34) in tRNA + S-adenosyl-L-homocysteine + H(+). Its function is as follows. Catalyzes carboxymethyl transfer from carboxy-S-adenosyl-L-methionine (Cx-SAM) to 5-hydroxyuridine (ho5U) to form 5-carboxymethoxyuridine (cmo5U) at position 34 in tRNAs. In Pseudomonas fluorescens (strain SBW25), this protein is tRNA U34 carboxymethyltransferase.